The primary structure comprises 403 residues: Argininosuccinate synthase (403 aa).

ATP-binding positions include 13–21 (AYSGGLDTS) and A40. The L-citrulline site is built by Y91 and S96. An ATP-binding site is contributed by G121. L-aspartate contacts are provided by T123, N127, and D128. Position 127 (N127) interacts with L-citrulline. Residues R131, S180, S189, E265, and Y277 each contribute to the L-citrulline site.

It belongs to the argininosuccinate synthase family. Type 1 subfamily. As to quaternary structure, homotetramer.

The protein localises to the cytoplasm. The catalysed reaction is L-citrulline + L-aspartate + ATP = 2-(N(omega)-L-arginino)succinate + AMP + diphosphate + H(+). Its pathway is amino-acid biosynthesis; L-arginine biosynthesis; L-arginine from L-ornithine and carbamoyl phosphate: step 2/3. The protein is Argininosuccinate synthase of Leptospira interrogans serogroup Icterohaemorrhagiae serovar copenhageni (strain Fiocruz L1-130).